The following is a 345-amino-acid chain: MNSELFSPYTIKDVTLKNRIVMSPMCMYSSENEDGQVTNFHLIHYGTRAAGQVGLVMIEATAVLPEGRISNKDLGIWDDSLIEGLHKTTTFIHDNGAKAAIQLAHAGRKAELETDALAPSAVPFNETMKIPVEMSIQQIKNTILAFQQAAVRSKQAGFDVIEIHGAHGYLINEFLSPLSNKRTDEYGGSPEKRYRFLREIIDSINEVWNGPLFVRISANDYHPDGLTVQDYVQYTKWMKEQGVDLIDCSSGAVVPARIDVYPGYQVQYAKHIKEHANIATGAVGLITTGAQAEQILTNNEADLIFIGRELLRNPYFPRIAANELGFELEEPYQYERAPGKISTNK.

23–26 (SPMC) contributes to the FMN binding site. Tyr-28 contacts substrate. Ala-60 and Gln-102 together coordinate FMN. A substrate-binding site is contributed by 164–167 (HGAH). Residues Arg-215 and 307 to 308 (GR) each bind FMN.

This sequence belongs to the NADH:flavin oxidoreductase/NADH oxidase family. NamA subfamily. Homotetramer. Requires FMN as cofactor.

It carries out the reaction A + NADPH + H(+) = AH2 + NADP(+). Catalyzes the reduction of the double bond of an array of alpha,beta-unsaturated aldehydes and ketones. It also reduces the nitro group of nitroester and nitroaromatic compounds. It could have a role in detoxification processes. This is NADPH dehydrogenase from Bacillus thuringiensis (strain Al Hakam).